The primary structure comprises 161 residues: Monooxygenase AgnL5 (161 aa).

The protein belongs to the avfA family.

The protein operates within secondary metabolite biosynthesis. Monooxygenase; part of the gene cluster that mediates the biosynthesis of agnestins, dihydroxy-xanthone metabolites. The pathway begins with the assembly and cyclization of atrochrysone thioester by the non-reducing polyketide synthase Agnpks1. The atrochrysone carboxyl ACP thioesterase AgnL7 then breaks the thioester bond and releases the atrochrysone carboxylic acid as the first enzyme-free intermediate. The decarboxylase AgnL1 then catalyzes the concerted decarboxylation-elimination required to convert atochrysone carboxylic acid into emodin anthrone, which is further oxidized to emodin by the anthrone oxygenase AgnL2. Emodin then undergoes reduction catalyzed by the oxidoreductase AgnL4 to yield the dihydroquinone tautomer which is the substrate for reduction by the short chain dehydrogenase AgnL6 reduction to produce hydroxyketone, followed by AgnL8 dehydration and likely spontaneous autoxidation to chrysophanol. Baeyer-Villiger oxidation by the oxidase AgnL3 leads to monodictyphenone via cleavage of the C-10/C-10a bond of chrysophanol. Alternative cleavage at the C-4a/C-10 bond of chrysophanol also leads to the formation some cephalone F. Further conversion to agnestins A and B, requires reduction to dihydro-monodictyphenone, oxidation to agnestin C probably via an epoxide, and rearrangement to either agnestin A or agnestin B directly, although agnestin A or agnestin B can also interconvert. Within the cluster, AgnR1 is the only unassigned oxidoreductase present which could be involved in this conversion. However, AgnR1 seems not to be involved in this step, and thus genes involved in the proposed oxidation/reduction may be located elsewhere on the genome. Further agnestin A derivatives are probably formed by spontaneous decarboxylations, dehydrations and methanolysis reactions. This Paecilomyces divaricatus (Penicillium divaricatum) protein is Monooxygenase AgnL5.